A 299-amino-acid chain; its full sequence is Nucleotide-binding protein SAV_6292 (299 aa).

Residue 23–30 (GMSGAGRS) coordinates ATP. 74–77 (DVRG) is a binding site for GTP.

This sequence belongs to the RapZ-like family.

Its function is as follows. Displays ATPase and GTPase activities. This chain is Nucleotide-binding protein SAV_6292, found in Streptomyces avermitilis (strain ATCC 31267 / DSM 46492 / JCM 5070 / NBRC 14893 / NCIMB 12804 / NRRL 8165 / MA-4680).